The primary structure comprises 98 residues: Small ribosomal subunit protein bS6 (98 aa).

It belongs to the bacterial ribosomal protein bS6 family.

Binds together with bS18 to 16S ribosomal RNA. The sequence is that of Small ribosomal subunit protein bS6 from Staphylococcus carnosus (strain TM300).